Reading from the N-terminus, the 888-residue chain is C2H2 zinc finger transcription factor sltA (888 aa).

3 disordered regions span residues 1–78 (MSTS…QRSP), 132–176 (IDSQ…SSEN), and 388–407 (RSSM…ASAP). 3 stretches are compositionally biased toward polar residues: residues 23 to 32 (PSLSASTSIE), 167 to 176 (GLGTSLSSEN), and 388 to 397 (RSSMPSNREP). 2 C2H2-type zinc fingers span residues 500 to 522 (QKCK…EKTH) and 561 to 586 (YKCK…EKAH). Residues 589-663 (DYVRSKHNGR…PTQTGSGDFP (75 aa)) are disordered. Over residues 602–632 (KASNGATPQTPSIATPSSKAQGITTPLTGSE) the composition is skewed to polar residues.

Its subcellular location is the nucleus. Functionally, transcription factor that contributes to azole resistance by coregulating the expression of the drug target erg11A and the drug efflux pump mdr1. Binds to the 5'-AGGCA-3' motif in the promoters of ergosterol biosynthesis and drug pump genes to regulate their expression. Is able to interact with the promoters of sltA, sltB, erg11A, erg13A, erg24A, mdr1, abcE and mfsC. Involved in antifungal drug resistance to azoles, terbinafine, and simvastatin but not amphotericin B or caspofungin. The sequence is that of C2H2 zinc finger transcription factor sltA from Aspergillus fumigatus (strain CBS 144.89 / FGSC A1163 / CEA10) (Neosartorya fumigata).